The following is a 137-amino-acid chain: 3-hydroxyacyl-[acyl-carrier-protein] dehydratase FabZ (137 aa).

The active site involves His-46.

This sequence belongs to the thioester dehydratase family. FabZ subfamily.

The protein resides in the cytoplasm. The enzyme catalyses a (3R)-hydroxyacyl-[ACP] = a (2E)-enoyl-[ACP] + H2O. Its function is as follows. Involved in unsaturated fatty acids biosynthesis. Catalyzes the dehydration of short chain beta-hydroxyacyl-ACPs and long chain saturated and unsaturated beta-hydroxyacyl-ACPs. This Thermotoga neapolitana (strain ATCC 49049 / DSM 4359 / NBRC 107923 / NS-E) protein is 3-hydroxyacyl-[acyl-carrier-protein] dehydratase FabZ.